The following is a 198-amino-acid chain: NAD(P)H dehydrogenase (quinone) (198 aa).

A Flavodoxin-like domain is found at V4–V189. FMN contacts are provided by residues S10–I15 and T78–F80. Y12 contacts NAD(+). Substrate is bound at residue W98. Residues S113–G118 and H133 contribute to the FMN site.

It belongs to the WrbA family. FMN serves as cofactor.

It catalyses the reaction a quinone + NADH + H(+) = a quinol + NAD(+). The catalysed reaction is a quinone + NADPH + H(+) = a quinol + NADP(+). This chain is NAD(P)H dehydrogenase (quinone), found in Escherichia coli (strain SE11).